The primary structure comprises 321 residues: Ribosomal RNA small subunit methyltransferase H (321 aa).

S-adenosyl-L-methionine contacts are provided by residues 40–42, Asp60, Phe84, Asp106, and Gln113; that span reads GGH.

It belongs to the methyltransferase superfamily. RsmH family.

The protein resides in the cytoplasm. The enzyme catalyses cytidine(1402) in 16S rRNA + S-adenosyl-L-methionine = N(4)-methylcytidine(1402) in 16S rRNA + S-adenosyl-L-homocysteine + H(+). In terms of biological role, specifically methylates the N4 position of cytidine in position 1402 (C1402) of 16S rRNA. In Pasteurella multocida (strain Pm70), this protein is Ribosomal RNA small subunit methyltransferase H.